The sequence spans 188 residues: Elongation factor P (188 aa).

Belongs to the elongation factor P family.

The protein localises to the cytoplasm. The protein operates within protein biosynthesis; polypeptide chain elongation. In terms of biological role, involved in peptide bond synthesis. Stimulates efficient translation and peptide-bond synthesis on native or reconstituted 70S ribosomes in vitro. Probably functions indirectly by altering the affinity of the ribosome for aminoacyl-tRNA, thus increasing their reactivity as acceptors for peptidyl transferase. The sequence is that of Elongation factor P from Rickettsia peacockii (strain Rustic).